The primary structure comprises 285 residues: ATP synthase gamma chain (285 aa).

This sequence belongs to the ATPase gamma chain family. In terms of assembly, F-type ATPases have 2 components, CF(1) - the catalytic core - and CF(0) - the membrane proton channel. CF(1) has five subunits: alpha(3), beta(3), gamma(1), delta(1), epsilon(1). CF(0) has three main subunits: a, b and c.

The protein localises to the cell membrane. Functionally, produces ATP from ADP in the presence of a proton gradient across the membrane. The gamma chain is believed to be important in regulating ATPase activity and the flow of protons through the CF(0) complex. The chain is ATP synthase gamma chain from Dehalococcoides mccartyi (strain ATCC BAA-2266 / KCTC 15142 / 195) (Dehalococcoides ethenogenes (strain 195)).